Here is a 284-residue protein sequence, read N- to C-terminus: Bifunctional protein FolD (284 aa).

NADP(+) is bound by residues 166–168 (GAS) and isoleucine 232.

Belongs to the tetrahydrofolate dehydrogenase/cyclohydrolase family. In terms of assembly, homodimer.

It carries out the reaction (6R)-5,10-methylene-5,6,7,8-tetrahydrofolate + NADP(+) = (6R)-5,10-methenyltetrahydrofolate + NADPH. It catalyses the reaction (6R)-5,10-methenyltetrahydrofolate + H2O = (6R)-10-formyltetrahydrofolate + H(+). Its pathway is one-carbon metabolism; tetrahydrofolate interconversion. Its function is as follows. Catalyzes the oxidation of 5,10-methylenetetrahydrofolate to 5,10-methenyltetrahydrofolate and then the hydrolysis of 5,10-methenyltetrahydrofolate to 10-formyltetrahydrofolate. The protein is Bifunctional protein FolD of Pseudomonas aeruginosa (strain LESB58).